Here is an 862-residue protein sequence, read N- to C-terminus: Phosphofurin acidic cluster sorting protein 2 (862 aa).

Disordered stretches follow at residues 151 to 215 (HEDS…TTSM), 263 to 436 (LDVE…TRSQ), and 658 to 713 (SSAT…SQGV). Residues 263-272 (LDVENPSDSG) are compositionally biased toward low complexity. The segment covering 313-328 (SHREPPSPADVPEKTR) has biased composition (basic and acidic residues). A compositionally biased stretch (polar residues) spans 332–344 (GKQQLSDSVSDTV). Ser-361, Ser-387, Ser-424, Ser-662, and Ser-665 each carry phosphoserine. Composition is skewed to low complexity over residues 658–693 (SSAT…KEAS) and 700–710 (PSVSGGLSSPS).

It belongs to the PACS family. In terms of assembly, interacts with BID and PKD2. Interacts with SIRT1. Interacts with HDAC1. Interacts with TRPV1. Interacts with WDR37.

It localises to the endoplasmic reticulum. It is found in the mitochondrion. Its function is as follows. Multifunctional sorting protein that controls the endoplasmic reticulum (ER)-mitochondria communication, including the apposition of mitochondria with the ER and ER homeostasis. In addition, in response to apoptotic inducer, translocates BIB to mitochondria, which initiates a sequence of events including the formation of mitochondrial truncated BID, the release of cytochrome c, the activation of caspase-3 thereby causing cell death. May also involved in ion channel trafficking, directing acidic cluster-containing ion channels to distinct subcellular compartments. This chain is Phosphofurin acidic cluster sorting protein 2 (Pacs2), found in Mus musculus (Mouse).